A 432-amino-acid chain; its full sequence is Competence protein ComFA (432 aa).

Positions 40, 43, 60, and 63 each coordinate Zn(2+). Residues 107–257 (LQAVDKQKPT…RLGELKRLNL (151 aa)) enclose the Helicase ATP-binding domain. 120–127 (AVTGAGKT) lines the ATP pocket. The short motif at 205–208 (DEVD) is the DEAD box element. A Helicase C-terminal domain is found at 289–432 (KLKSYIEKQR…IQMMNKEAGL (144 aa)).

The protein belongs to the DEAD box helicase family. In terms of assembly, monomer and dimer in solution. Interacts with DprA and ComFC; ComFA-ComFC form rings about 150 Angstroms in diameter with apparent 6-fold symmetry. Zn(2+) serves as cofactor.

It localises to the cytoplasm. In terms of biological role, involved in transformation (genetic competence for DNA uptake). DNA uptake is energy dependent, this protein may provide the driving force for DNA uptake. Does not have helicase activity, translocates on single-stranded (ss)DNA in a 5'-3' direction in an ATP-dependent manner, but does not unwind double-stranded (ds)DNA (tested with 5'- and 3'-overhang dsDNA). ATP hydrolysis causes the release of ssDNA from ComFA. A ssDNA-stimulated ATPase; dsDNA does not stimulate ATPase. ATP hydrolysis causes the release of ssDNA from ComFA. ComFC has no effect on ATPase activity. Binds ssDNA but only very poorly to dsDNA in the absence of ATP. Binding to ssDNA does not require free DNA ends. This Streptococcus pneumoniae (strain ATCC BAA-255 / R6) protein is Competence protein ComFA.